Reading from the N-terminus, the 219-residue chain is uncharacterized protein (219 aa).

A compositionally biased stretch (low complexity) spans 1–17 (MIINNQNSPQSINTPSS). Residues 1–31 (MIINNQNSPQSINTPSSVSSRQHINKSKKKK) are disordered. A run of 2 helical transmembrane segments spans residues 49 to 69 (SLAT…LVCK) and 83 to 105 (LVYR…SYIG). The disordered stretch occupies residues 135-219 (NHRSPIPLTN…NSDLEIPIPI (85 aa)). A compositionally biased stretch (low complexity) spans 144-212 (NLNNNNNNNN…SNNNNDNNSD (69 aa)).

Its subcellular location is the membrane. This is an uncharacterized protein from Dictyostelium discoideum (Social amoeba).